The sequence spans 89 residues: Large ribosomal subunit protein uL29c (89 aa).

It belongs to the universal ribosomal protein uL29 family.

It localises to the plastid. It is found in the chloroplast. In Trieres chinensis (Marine centric diatom), this protein is Large ribosomal subunit protein uL29c (rpl29).